A 423-amino-acid polypeptide reads, in one-letter code: Serine--tRNA ligase (423 aa).

The segment covering 1-12 has biased composition (basic and acidic residues); that stretch reads MIDLKALRENPD. Residues 1-26 are disordered; that stretch reads MIDLKALRENPDVGRASQRSRGEDPE. Position 230 to 232 (230 to 232) interacts with L-serine; the sequence is TSE. ATP-binding positions include 261–263 and V277; that span reads RRE. Residue E284 participates in L-serine binding. Residue 348–351 coordinates ATP; it reads ELTS. T383 is an L-serine binding site.

It belongs to the class-II aminoacyl-tRNA synthetase family. Type-1 seryl-tRNA synthetase subfamily. In terms of assembly, homodimer. The tRNA molecule binds across the dimer.

The protein resides in the cytoplasm. The enzyme catalyses tRNA(Ser) + L-serine + ATP = L-seryl-tRNA(Ser) + AMP + diphosphate + H(+). It catalyses the reaction tRNA(Sec) + L-serine + ATP = L-seryl-tRNA(Sec) + AMP + diphosphate + H(+). It functions in the pathway aminoacyl-tRNA biosynthesis; selenocysteinyl-tRNA(Sec) biosynthesis; L-seryl-tRNA(Sec) from L-serine and tRNA(Sec): step 1/1. In terms of biological role, catalyzes the attachment of serine to tRNA(Ser). Is also able to aminoacylate tRNA(Sec) with serine, to form the misacylated tRNA L-seryl-tRNA(Sec), which will be further converted into selenocysteinyl-tRNA(Sec). This chain is Serine--tRNA ligase, found in Beutenbergia cavernae (strain ATCC BAA-8 / DSM 12333 / CCUG 43141 / JCM 11478 / NBRC 16432 / NCIMB 13614 / HKI 0122).